A 275-amino-acid polypeptide reads, in one-letter code: 3-methyl-2-oxobutanoate hydroxymethyltransferase (275 aa).

Mg(2+) is bound by residues Asp-44 and Asp-83. 3-methyl-2-oxobutanoate-binding positions include Asp-44 to Ser-45, Asp-83, and Lys-113. Residue Glu-115 coordinates Mg(2+). Glu-182 serves as the catalytic Proton acceptor.

Belongs to the PanB family. In terms of assembly, homodecamer; pentamer of dimers. Mg(2+) serves as cofactor.

It localises to the cytoplasm. The catalysed reaction is 3-methyl-2-oxobutanoate + (6R)-5,10-methylene-5,6,7,8-tetrahydrofolate + H2O = 2-dehydropantoate + (6S)-5,6,7,8-tetrahydrofolate. Its pathway is cofactor biosynthesis; (R)-pantothenate biosynthesis; (R)-pantoate from 3-methyl-2-oxobutanoate: step 1/2. Catalyzes the reversible reaction in which hydroxymethyl group from 5,10-methylenetetrahydrofolate is transferred onto alpha-ketoisovalerate to form ketopantoate. This Clostridium botulinum (strain 657 / Type Ba4) protein is 3-methyl-2-oxobutanoate hydroxymethyltransferase.